A 685-amino-acid chain; its full sequence is E3 ubiquitin-protein ligase RNF6 (685 aa).

Composition is skewed to basic and acidic residues over residues 1–10 (MNQSRSRSDG), 17–29 (PQDH…ERRW), and 88–107 (DLRD…SSHE). Disordered stretches follow at residues 1-29 (MNQS…ERRW), 81-107 (EQLA…SSHE), 121-142 (GNAT…RTNP), 168-273 (DYTD…REGQ), 286-345 (RSNV…RRRG), and 499-576 (EADS…NPNN). Composition is skewed to polar residues over residues 199–213 (SQTS…SNIP), 250–264 (ASRT…QSGG), and 286–297 (RSNVTVRNTNQR). The span at 303–313 (LRSTSNSRSRS) shows a compositional bias: low complexity. Polar residues-rich tracts occupy residues 314–325 (PIQRQSGTVYHN) and 519–528 (ELSNLGTDNN). An RING-type zinc finger spans residues 632–673 (CSVCISDYVTGNKLRQLPCMHEFHIHCIDRWLSENCTCPICR).

Belongs to the RNF12 family. As to expression, weakly expressed in peripheral blood, spleen, prostate, testis and ovary. According to a report, it is preferentially expressed in testis and ovary and hardly detected in other tissues.

It localises to the nucleus. It is found in the cytoplasm. The protein resides in the cell projection. The protein localises to the axon. Its subcellular location is the PML body. It carries out the reaction S-ubiquitinyl-[E2 ubiquitin-conjugating enzyme]-L-cysteine + [acceptor protein]-L-lysine = [E2 ubiquitin-conjugating enzyme]-L-cysteine + N(6)-ubiquitinyl-[acceptor protein]-L-lysine.. It participates in protein modification; protein ubiquitination. Its function is as follows. E3 ubiquitin-protein ligase mediating 'Lys-48'-linked polyubiquitination of LIMK1 and its subsequent targeting to the proteasome for degradation. Negatively regulates axonal outgrowth through regulation of the LIMK1 turnover. Mediates 'Lys-6' and 'Lys-27'-linked polyubiquitination of AR/androgen receptor thereby modulating its transcriptional activity. May also bind DNA and function as a transcriptional regulator. Mediates polyubiquitination of QKI in macrophages, leading to its degradation. In Homo sapiens (Human), this protein is E3 ubiquitin-protein ligase RNF6.